The sequence spans 331 residues: Phosphate acyltransferase (331 aa).

The protein belongs to the PlsX family. Homodimer. Probably interacts with PlsY.

It is found in the cytoplasm. It catalyses the reaction a fatty acyl-[ACP] + phosphate = an acyl phosphate + holo-[ACP]. It participates in lipid metabolism; phospholipid metabolism. Its function is as follows. Catalyzes the reversible formation of acyl-phosphate (acyl-PO(4)) from acyl-[acyl-carrier-protein] (acyl-ACP). This enzyme utilizes acyl-ACP as fatty acyl donor, but not acyl-CoA. This is Phosphate acyltransferase from Lactococcus lactis subsp. cremoris (strain SK11).